The following is a 202-amino-acid chain: Arenicin-2 (202 aa).

A signal peptide spans 1 to 25 (MTSTQSVAVYATLILAIFCFNDIHC). Residues 26-181 (DPIAEARAAA…SGDNNEPEKR (156 aa)) constitute a propeptide that is removed on maturation. Residues 73 to 168 (GDGVEGSVMV…ACQGKSVYWL (96 aa)) enclose the BRICHOS domain. 2 disulfides stabilise this stretch: cysteine 100–cysteine 160 and cysteine 184–cysteine 201.

Has antimicrobial activity against the Gram-negative bacteria E.coli and P.mirabilis, the Gram-positive bacterium L.monocytogenes and the yeast C.albicans. This is Arenicin-2 from Arenicola marina (Lugworm).